We begin with the raw amino-acid sequence, 289 residues long: Oxaloacetate decarboxylase (289 aa).

Ser-50 is a binding site for substrate. Residue Asp-88 participates in Mg(2+) binding. The substrate site is built by Arg-159 and His-235.

Belongs to the isocitrate lyase/PEP mutase superfamily. Oxaloacetate decarboxylase family. In terms of assembly, homotetramer; dimer of dimers. The cofactor is Mg(2+).

It catalyses the reaction oxaloacetate + H(+) = pyruvate + CO2. Catalyzes the decarboxylation of oxaloacetate into pyruvate. Seems to play a role in maintaining cellular concentrations of bicarbonate and pyruvate. The polypeptide is Oxaloacetate decarboxylase (Pseudomonas putida (strain GB-1)).